Here is a 280-residue protein sequence, read N- to C-terminus: Pantothenate synthetase (280 aa).

Residue 26–33 (MGNLHDGH) participates in ATP binding. His-33 acts as the Proton donor in catalysis. Gln-57 contributes to the (R)-pantoate binding site. Gln-57 is a binding site for beta-alanine. Residue 147 to 150 (GKKD) participates in ATP binding. Gln-153 is a binding site for (R)-pantoate. 184 to 187 (LSSR) is a binding site for ATP.

Belongs to the pantothenate synthetase family. Homodimer.

Its subcellular location is the cytoplasm. The catalysed reaction is (R)-pantoate + beta-alanine + ATP = (R)-pantothenate + AMP + diphosphate + H(+). It participates in cofactor biosynthesis; (R)-pantothenate biosynthesis; (R)-pantothenate from (R)-pantoate and beta-alanine: step 1/1. Functionally, catalyzes the condensation of pantoate with beta-alanine in an ATP-dependent reaction via a pantoyl-adenylate intermediate. The sequence is that of Pantothenate synthetase from Verminephrobacter eiseniae (strain EF01-2).